We begin with the raw amino-acid sequence, 472 residues long: Ribulose bisphosphate carboxylase large chain 1 (472 aa).

Residues asparagine 115 and threonine 165 each coordinate substrate. Lysine 167 functions as the Proton acceptor in the catalytic mechanism. Lysine 169 contributes to the substrate binding site. Mg(2+) contacts are provided by lysine 193, aspartate 195, and glutamate 196. Residue lysine 193 is modified to N6-carboxylysine. The active-site Proton acceptor is the histidine 286. 3 residues coordinate substrate: arginine 287, histidine 319, and serine 371.

This sequence belongs to the RuBisCO large chain family. Type I subfamily. As to quaternary structure, heterohexadecamer of 8 large chains and 8 small chains. The cofactor is Mg(2+).

It catalyses the reaction 2 (2R)-3-phosphoglycerate + 2 H(+) = D-ribulose 1,5-bisphosphate + CO2 + H2O. The catalysed reaction is D-ribulose 1,5-bisphosphate + O2 = 2-phosphoglycolate + (2R)-3-phosphoglycerate + 2 H(+). In terms of biological role, ruBisCO catalyzes two reactions: the carboxylation of D-ribulose 1,5-bisphosphate, the primary event in carbon dioxide fixation, as well as the oxidative fragmentation of the pentose substrate. Both reactions occur simultaneously and in competition at the same active site. The chain is Ribulose bisphosphate carboxylase large chain 1 from Allochromatium vinosum (strain ATCC 17899 / DSM 180 / NBRC 103801 / NCIMB 10441 / D) (Chromatium vinosum).